Consider the following 103-residue polypeptide: uncharacterized protein (103 aa).

Transmembrane regions (helical) follow at residues Pro-42 to Ala-62 and Thr-65 to Ala-85.

Its subcellular location is the membrane. This is an uncharacterized protein from Saccharomyces cerevisiae (strain ATCC 204508 / S288c) (Baker's yeast).